The primary structure comprises 833 residues: Phenylalanine--tRNA ligase beta subunit (833 aa).

The tRNA-binding domain maps to 42-157 (ADLKGPLAVG…PEYEVGTDAI (116 aa)). The 75-residue stretch at 411 to 485 (SAPHTITIPA…RLEGYENLPS (75 aa)) folds into the B5 domain. Mg(2+) is bound by residues Asp463, Asp469, Glu472, and Glu473. The region spanning 739 to 832 (STFPVATQDV…AAERTGAALR (94 aa)) is the FDX-ACB domain.

Belongs to the phenylalanyl-tRNA synthetase beta subunit family. Type 1 subfamily. In terms of assembly, tetramer of two alpha and two beta subunits. It depends on Mg(2+) as a cofactor.

It is found in the cytoplasm. The enzyme catalyses tRNA(Phe) + L-phenylalanine + ATP = L-phenylalanyl-tRNA(Phe) + AMP + diphosphate + H(+). This is Phenylalanine--tRNA ligase beta subunit from Streptomyces avermitilis (strain ATCC 31267 / DSM 46492 / JCM 5070 / NBRC 14893 / NCIMB 12804 / NRRL 8165 / MA-4680).